A 525-amino-acid chain; its full sequence is D-aminopeptidase (525 aa).

Ser62 acts as the Nucleophile in catalysis. Lys65 acts as the Proton donor/acceptor in catalysis. Positions 485-495 (PRALDHTAPGD) are important for specificity. A substrate-binding site is contributed by Asp489.

This sequence belongs to the peptidase S12 family. Homodimer.

The enzyme catalyses Release of an N-terminal D-amino acid from a peptide, Xaa-|-Yaa-, in which Xaa is preferably D-Ala, D-Ser or D-Thr. D-amino acid amides and methyl esters also are hydrolyzed, as is glycine amide.. Its activity is regulated as follows. Inhibited by beta-lactam compounds such as 6-aminopenicillic acid, 7-aminocephalosporanic acid, benzylpenicillin and ampicillin. Inhibited by p-chloromercuribenzoate. In terms of biological role, hydrolyzes N-terminal residues in D-amino acid-containing peptides. The protein is D-aminopeptidase of Gluconobacter oxydans (strain 621H) (Gluconobacter suboxydans).